A 479-amino-acid polypeptide reads, in one-letter code: Glutamate--tRNA ligase (479 aa).

Positions 21-31 (PSPTGYLHVGG) match the 'HIGH' region motif. The short motif at 248 to 252 (KLSKR) is the 'KMSKS' region element. Residue K251 coordinates ATP.

Belongs to the class-I aminoacyl-tRNA synthetase family. Glutamate--tRNA ligase type 1 subfamily. In terms of assembly, monomer.

The protein localises to the cytoplasm. It carries out the reaction tRNA(Glu) + L-glutamate + ATP = L-glutamyl-tRNA(Glu) + AMP + diphosphate. Functionally, catalyzes the attachment of glutamate to tRNA(Glu) in a two-step reaction: glutamate is first activated by ATP to form Glu-AMP and then transferred to the acceptor end of tRNA(Glu). This is Glutamate--tRNA ligase from Actinobacillus pleuropneumoniae serotype 5b (strain L20).